Reading from the N-terminus, the 361-residue chain is 3-dehydroquinate synthase (361 aa).

Residues 104–108 (GVIGD), 128–129 (TT), Lys141, Lys150, and 168–171 (FLRT) contribute to the NAD(+) site. The Zn(2+) site is built by Glu183, His246, and His263.

This sequence belongs to the sugar phosphate cyclases superfamily. Dehydroquinate synthase family. Requires Co(2+) as cofactor. Zn(2+) serves as cofactor. It depends on NAD(+) as a cofactor.

It is found in the cytoplasm. The enzyme catalyses 7-phospho-2-dehydro-3-deoxy-D-arabino-heptonate = 3-dehydroquinate + phosphate. The protein operates within metabolic intermediate biosynthesis; chorismate biosynthesis; chorismate from D-erythrose 4-phosphate and phosphoenolpyruvate: step 2/7. Its function is as follows. Catalyzes the conversion of 3-deoxy-D-arabino-heptulosonate 7-phosphate (DAHP) to dehydroquinate (DHQ). The protein is 3-dehydroquinate synthase of Opitutus terrae (strain DSM 11246 / JCM 15787 / PB90-1).